The following is a 1081-amino-acid chain: MGEDKETNILAGLGNTISQVENVVAASLRPLPTATGDGTYVAESTQTGLAKDLSHVDLKDVRTLAEVVKSAATGEPVDDKQYIMERVIQLAAGLPSTSRNAAELTKSFLNMLWNDLEHPPVSYLGADSMHRKADGSGNNRFWPQLGAAGSAYARSVRPKTMQSPSLPDPETIFDCLLRRKEYREHPNKISSVLFYLASIIIHDLFQTDPKDNSVSKTSSYLDLSPLYGNNQDEQNLVRTFKDGKLKPDCFATKRVLGFPPGVGVLLIMFNRFHNYVVDQLAAINECGRFTKPDESNVDEYAKYDNNLFQTGRLVTCGLYANIILKDYVRTILNINRTDSTWSLDPRMEMKDGLLGEAAAMATGNQVSAEFNVVYRWHACISKRDEKWTEDFHREIMPGVDPSTLSMQDFVAGLGRWQAGLPQEPLERPFSGLQRKPDGAFNDDDLVNLFEKSVEDCAGAFGASHVPAIFKSVEALGIMQARRWNLGTLNEFRQYFNLAPHKTFEDINSDPYIADQLKRLYDHPDLVEIYPGVVVEEAKDSMVPGSGLCTNFTISRAILSDAVALVRGDRFYTVDYTPKHLTNWAYNEIQPNNAVDQGQVFYKLVLRAFPNHFDGNSIYAHFPLVVPSENEKILKSLGVAEKYSWEKPSRISHPIFISSHAACMSILENQETFKVTWGRKIEFLMQRDKHQYGKDFMLSGDRPPNAASRKMMGSALYRDEWEAEVKNFYEQTTLKLLHKNSYKLAGVNQVDIVRDVANLAQVHFCSSVFSLPLKTDSNPRGIFAESELYKIMAAVFTAIFYDADIGKSFELNQAARTVTQQLGQLTMANVEIIAKTGLIANLVNRLHRRDVLSEYGIHMIQRLLDSGLPATEIVWTHILPTAGGMVANQAQLFSQCLDYYLSEEGSGHLPEINRLAKENTPEADELLTRYFMEGARLRSSVALPRVAAQPTVVEDNGEKLTIKAGQVVMCNLVSACMDPTAFPDPEKVKLDRDMNLYAHFGFGPHKCLGLDLCKTGLSTMLKVLGRLDNLRRAPGAQGQLKKLSGPGGIAKYMNEDQSGFTPFPSTMKIQWDGELPQLKEDF.

The tract at residues 105–446 (TKSFLNMLWN…DGAFNDDDLV (342 aa)) is linoleate 8R-lipoxygenase. His202 is a heme b binding site. The active site involves Tyr374. A heme b-binding site is contributed by His377. Positions 654–1081 (IFISSHAACM…GELPQLKEDF (428 aa)) are 9,12-octadecadienoate 8-hydroperoxide 8R-isomerase.

This sequence belongs to the peroxidase family. As to quaternary structure, homotetramer. Requires heme b as cofactor.

The catalysed reaction is (9Z,12Z)-octadecadienoate + O2 = (8R,9Z,12Z)-8-hydroperoxyoctadeca-9,12-dienoate. It catalyses the reaction (8R,9Z,12Z)-8-hydroperoxyoctadeca-9,12-dienoate = (5S,8R,9Z,12Z)-5,8-dihydroxyoctadeca-9,12-dienoate. Functionally, bifunctional heme-containing enzyme that oxidizes linoleic acid to (8R,9Z,12Z)-8-hydroperoxyoctadeca-9,12-dienoate (within the N-terminal heme peroxidase domain), which is subsequently isomerized to (5S,8R,9Z,12Z)-5,8-dihydroxyoctadeca-9,12-dienoate (within the C-terminal P450 heme thiolate domain). Oxidized unsaturated fatty acids, so-called oxylipins, derived from endogenous fatty acids, influence the development of the asexual conidiophores and sexual cleistothecia and regulate the secondary metabolism. These substances were collectively named psi factors and are primarily a mixture of hydroxylated oleic, linoleic and alpha-linolenic acids. They are termed psi-beta, psi-alpha, and psi-gamma, respectively. The chain is Psi-producing oxygenase A (ppoA) from Emericella nidulans (Aspergillus nidulans).